Here is a 260-residue protein sequence, read N- to C-terminus: Indole-3-glycerol phosphate synthase (260 aa).

This sequence belongs to the TrpC family.

The enzyme catalyses 1-(2-carboxyphenylamino)-1-deoxy-D-ribulose 5-phosphate + H(+) = (1S,2R)-1-C-(indol-3-yl)glycerol 3-phosphate + CO2 + H2O. Its pathway is amino-acid biosynthesis; L-tryptophan biosynthesis; L-tryptophan from chorismate: step 4/5. This is Indole-3-glycerol phosphate synthase from Thermoanaerobacter sp. (strain X514).